The chain runs to 274 residues: MRSNNNNPLTRDEILSRYFPQYRPAVATSQGLSGGSCIIAHDTHRVVLRRHHDPDAPPAHFLRHYRALSQLPASLAPRALFYTPGWMAVEYLHGVVNSALPDADELAALLYHLHQQPRFGWRIALSPLLAQYWSCCDPARRTPFWLRRLKQLQKNGEPRPLRLAPLHMDVHGDNIVLTSAGLRLIDWEYAGDGDIALELAAVWVEDERQHRQLADAYAARARIDARQLWRQIRLWHPWVIMLKAGWFEYRWRQTGEQQFIRLADETWRQLRMKG.

Belongs to the thiamine kinase family.

It carries out the reaction thiamine + ATP = thiamine phosphate + ADP + H(+). It functions in the pathway cofactor biosynthesis; thiamine diphosphate biosynthesis; thiamine phosphate from thiamine: step 1/1. Functionally, catalyzes the ATP-dependent phosphorylation of thiamine to thiamine phosphate. Is involved in thiamine salvage. In Salmonella typhimurium (strain LT2 / SGSC1412 / ATCC 700720), this protein is Thiamine kinase.